The sequence spans 219 residues: 2,5-diamino-6-ribosylamino-4(3H)-pyrimidinone 5'-phosphate reductase (219 aa).

Residues threonine 52, aspartate 56, 87–90 (SRCR), valine 134, and 156–159 (GGTL) each bind NADP(+).

It belongs to the HTP reductase family. As to quaternary structure, homodimer.

The catalysed reaction is 2,5-diamino-6-(1-D-ribitylamino)pyrimidin-4(3H)-one 5'-phosphate + NADP(+) = 2,5-diamino-6-(1-D-ribosylamino)pyrimidin-4(3H)-one 5'-phosphate + NADPH + H(+). It carries out the reaction 2,5-diamino-6-(1-D-ribitylamino)pyrimidin-4(3H)-one 5'-phosphate + NAD(+) = 2,5-diamino-6-(1-D-ribosylamino)pyrimidin-4(3H)-one 5'-phosphate + NADH + H(+). It functions in the pathway cofactor biosynthesis; riboflavin biosynthesis. Its function is as follows. Catalyzes an early step in riboflavin biosynthesis, the NADPH-dependent reduction of the ribose side chain of 2,5-diamino-6-ribosylamino-4(3H)-pyrimidinone 5'-phosphate, yielding 2,5-diamino-6-ribitylamino-4(3H)-pyrimidinone 5'-phosphate. This chain is 2,5-diamino-6-ribosylamino-4(3H)-pyrimidinone 5'-phosphate reductase, found in Archaeoglobus fulgidus (strain ATCC 49558 / DSM 4304 / JCM 9628 / NBRC 100126 / VC-16).